Here is a 687-residue protein sequence, read N- to C-terminus: Translation initiation factor IF-2 (687 aa).

Residues 186-355 enclose the tr-type G domain; that stretch reads KRPPIVTVMG…LLTAEMLELK (170 aa). The interval 195–202 is G1; it reads GHVDHGKT. 195–202 contacts GTP; sequence GHVDHGKT. The interval 220–224 is G2; the sequence is GITQH. Residues 241-244 are G3; it reads DTPG. GTP contacts are provided by residues 241 to 245 and 295 to 298; these read DTPGH and NKID. Residues 295–298 are G4; sequence NKID. Residues 331 to 333 form a G5 region; it reads SAK.

The protein belongs to the TRAFAC class translation factor GTPase superfamily. Classic translation factor GTPase family. IF-2 subfamily.

It localises to the cytoplasm. In terms of biological role, one of the essential components for the initiation of protein synthesis. Protects formylmethionyl-tRNA from spontaneous hydrolysis and promotes its binding to the 30S ribosomal subunits. Also involved in the hydrolysis of GTP during the formation of the 70S ribosomal complex. The polypeptide is Translation initiation factor IF-2 (Clostridium botulinum (strain Eklund 17B / Type B)).